Reading from the N-terminus, the 334-residue chain is Uroporphyrinogen decarboxylase (334 aa).

Substrate contacts are provided by residues 22–26, aspartate 71, tyrosine 140, serine 195, and histidine 310; that span reads RQVGR.

Belongs to the uroporphyrinogen decarboxylase family. As to quaternary structure, homodimer.

Its subcellular location is the cytoplasm. The enzyme catalyses uroporphyrinogen III + 4 H(+) = coproporphyrinogen III + 4 CO2. It functions in the pathway porphyrin-containing compound metabolism; protoporphyrin-IX biosynthesis; coproporphyrinogen-III from 5-aminolevulinate: step 4/4. Catalyzes the decarboxylation of four acetate groups of uroporphyrinogen-III to yield coproporphyrinogen-III. The protein is Uroporphyrinogen decarboxylase of Chlamydia muridarum (strain MoPn / Nigg).